The following is a 235-amino-acid chain: MKKGEMIYQGKAKKVYETDDKDKVIIYYKDDATAFNGEKKGQITDKGILNNNITSSLFELLEKNNIPTHFEKKLNDREQLCKKVDIIPLEVIVRNVAAGSMAKRLGLEEGTPLKTTVFELSYKDDSLGDPIINDYHAVAIGIATWDELKTIYDMTASINDILELFFRKLGIKLIDFKLEFGKFKDKIVLADEISPDTCRLWDAVTNEKLDKDRFRRDMGNVKEAYEEILRRISDN.

The protein belongs to the SAICAR synthetase family.

It carries out the reaction 5-amino-1-(5-phospho-D-ribosyl)imidazole-4-carboxylate + L-aspartate + ATP = (2S)-2-[5-amino-1-(5-phospho-beta-D-ribosyl)imidazole-4-carboxamido]succinate + ADP + phosphate + 2 H(+). It participates in purine metabolism; IMP biosynthesis via de novo pathway; 5-amino-1-(5-phospho-D-ribosyl)imidazole-4-carboxamide from 5-amino-1-(5-phospho-D-ribosyl)imidazole-4-carboxylate: step 1/2. The chain is Phosphoribosylaminoimidazole-succinocarboxamide synthase from Clostridium kluyveri (strain NBRC 12016).